A 678-amino-acid polypeptide reads, in one-letter code: Glycine--tRNA ligase beta subunit (678 aa).

It belongs to the class-II aminoacyl-tRNA synthetase family. As to quaternary structure, tetramer of two alpha and two beta subunits.

It localises to the cytoplasm. It catalyses the reaction tRNA(Gly) + glycine + ATP = glycyl-tRNA(Gly) + AMP + diphosphate. The protein is Glycine--tRNA ligase beta subunit of Sulfurihydrogenibium sp. (strain YO3AOP1).